Reading from the N-terminus, the 509-residue chain is Maturase K (509 aa).

The protein belongs to the intron maturase 2 family. MatK subfamily.

It localises to the plastid. Its subcellular location is the chloroplast. Usually encoded in the trnK tRNA gene intron. Probably assists in splicing its own and other chloroplast group II introns. The protein is Maturase K of Cicer arietinum (Chickpea).